We begin with the raw amino-acid sequence, 741 residues long: T-box transcription factor TBX3 (741 aa).

Positions 107-220 (LEAKELWDQF…NNISDKHGFT (114 aa)) form a DNA-binding region, T-box; first part. A DNA-binding region (T-box; second part) is located at residues 241-305 (ILNSMHKYQP…NNPFAKGFRD (65 aa)). Ser369 carries the phosphoserine modification. Residues 369-469 (SEAESDAEAE…EGPVATKVDE (101 aa)) form a disordered region. Composition is skewed to basic and acidic residues over residues 377–386 (AESKEEHGPE) and 420–437 (SRAR…DSRH). Phosphoserine occurs at positions 432, 438, 456, 705, 736, 738, and 740. Residues 438 to 447 (SPATISSSTR) are compositionally biased toward polar residues.

In terms of assembly, interacts with PML. As to expression, in adults, highest levels in lung. Also found in brain, heart, kidney, liver and ovary.

It is found in the nucleus. In terms of biological role, transcriptional repressor involved in developmental processes. Binds to the palindromic T site 5'-TTCACACCTAGGTGTGAA-3' DNA sequence, or a half-site, which are present in the regulatory region of several genes. Probably plays a role in limb pattern formation. Required for mammary placode induction, and maintenance of the mammary buds during development. Involved in branching morphogenesis in both developing lungs and adult mammary glands, via negative modulation of target genes; acting redundantly with TBX2. Required, together with TBX2, to maintain cell proliferation in the embryonic lung mesenchyme; perhaps acting downstream of SHH, BMP and TGFbeta signaling. Involved in modulating early inner ear development, acting independently of, and also redundantly with, TBX2 in different subregions of the developing ear. Acts as a negative regulator of PML function in cellular senescence. The chain is T-box transcription factor TBX3 (Tbx3) from Mus musculus (Mouse).